Here is a 176-residue protein sequence, read N- to C-terminus: Protein SPMIP1 (176 aa).

The disordered stretch occupies residues 55-80 (TLHPKAPLSPPPAPKSAPSKVPSPVP). The segment covering 61–80 (PLSPPPAPKSAPSKVPSPVP) has biased composition (pro residues).

The sequence is that of Protein SPMIP1 from Homo sapiens (Human).